The sequence spans 301 residues: NADH-cytochrome b5 reductase 3 (301 aa).

Glycine 2 carries the N-myristoyl glycine lipid modification. Positions 40–152 (DIKYPLRLID…RGPSGLLVYQ (113 aa)) constitute an FAD-binding FR-type domain. Lysine 42 bears the N6-acetyllysine mark. Position 43 is a phosphotyrosine (tyrosine 43). Residues arginine 92, proline 93, tyrosine 94, valine 109, lysine 111, and phenylalanine 114 each coordinate FAD. Lysine 120 carries the N6-acetyllysine modification. FAD-binding residues include lysine 126, methionine 127, serine 128, and threonine 185.

This sequence belongs to the flavoprotein pyridine nucleotide cytochrome reductase family. In terms of assembly, component of a complex composed of cytochrome b5, NADH-cytochrome b5 reductase (CYB5R3) and MTARC2. Interacts with MTLN; the interaction is required to maintain cellular lipid composition and leads to stimulation of mitochondrial respiratory complex I activity. FAD serves as cofactor. In terms of tissue distribution, expressed at late stages of erythroid maturation.

It is found in the endoplasmic reticulum membrane. It localises to the mitochondrion outer membrane. The protein localises to the cytoplasm. The enzyme catalyses 2 Fe(III)-[cytochrome b5] + NADH = 2 Fe(II)-[cytochrome b5] + NAD(+) + H(+). Catalyzes the reduction of two molecules of cytochrome b5 using NADH as the electron donor. This Homo sapiens (Human) protein is NADH-cytochrome b5 reductase 3.